A 443-amino-acid chain; its full sequence is 3-phosphoshikimate 1-carboxyvinyltransferase (443 aa).

Residues 1–22 (MSHASRPTPLEARGSTPLTGRV) form a disordered region. 3-phosphoshikimate-binding residues include lysine 28, serine 29, and arginine 33. Residue lysine 28 participates in phosphoenolpyruvate binding. Residues glycine 101 and arginine 129 each contribute to the phosphoenolpyruvate site. Positions 174, 176, 326, and 353 each coordinate 3-phosphoshikimate. Residue glutamine 176 coordinates phosphoenolpyruvate. Residue aspartate 326 is the Proton acceptor of the active site. Positions 357 and 400 each coordinate phosphoenolpyruvate.

The protein belongs to the EPSP synthase family. In terms of assembly, monomer.

It localises to the cytoplasm. It catalyses the reaction 3-phosphoshikimate + phosphoenolpyruvate = 5-O-(1-carboxyvinyl)-3-phosphoshikimate + phosphate. Its pathway is metabolic intermediate biosynthesis; chorismate biosynthesis; chorismate from D-erythrose 4-phosphate and phosphoenolpyruvate: step 6/7. In terms of biological role, catalyzes the transfer of the enolpyruvyl moiety of phosphoenolpyruvate (PEP) to the 5-hydroxyl of shikimate-3-phosphate (S3P) to produce enolpyruvyl shikimate-3-phosphate and inorganic phosphate. The sequence is that of 3-phosphoshikimate 1-carboxyvinyltransferase from Afipia carboxidovorans (strain ATCC 49405 / DSM 1227 / KCTC 32145 / OM5) (Oligotropha carboxidovorans).